The following is a 428-amino-acid chain: Cytochrome c biogenesis protein CcsB (428 aa).

A run of 3 helical transmembrane segments spans residues 14–34 (LKFA…GTFI), 72–92 (SLWF…CSFR), and 162–182 (IGPL…AYGS).

This sequence belongs to the Ccs1/CcsB family. May interact with CcsA.

It is found in the cellular thylakoid membrane. Its function is as follows. Required during biogenesis of c-type cytochromes (cytochrome c6 and cytochrome f) at the step of heme attachment. The sequence is that of Cytochrome c biogenesis protein CcsB from Prochlorococcus marinus (strain MIT 9301).